The chain runs to 418 residues: Dual-specificity RNA methyltransferase RlmN (418 aa).

Residues 1-21 (MADTSLMPIPGQVDPVPAPRD) are disordered. Glu122 functions as the Proton acceptor in the catalytic mechanism. In terms of domain architecture, Radical SAM core spans 128 to 383 (DADRGTLCVS…APVRTPRGRD (256 aa)). Cys135 and Cys388 are disulfide-bonded. Positions 142, 146, and 149 each coordinate [4Fe-4S] cluster. Residues 212 to 213 (GE), Ser244, 266 to 268 (SLH), and Asn345 contribute to the S-adenosyl-L-methionine site. Cys388 serves as the catalytic S-methylcysteine intermediate. The tract at residues 393 to 418 (TAAQKKSRAERDREAAAEAEAAASQA) is disordered. A compositionally biased stretch (basic and acidic residues) spans 399 to 408 (SRAERDREAA).

This sequence belongs to the radical SAM superfamily. RlmN family. [4Fe-4S] cluster serves as cofactor.

Its subcellular location is the cytoplasm. The enzyme catalyses adenosine(2503) in 23S rRNA + 2 reduced [2Fe-2S]-[ferredoxin] + 2 S-adenosyl-L-methionine = 2-methyladenosine(2503) in 23S rRNA + 5'-deoxyadenosine + L-methionine + 2 oxidized [2Fe-2S]-[ferredoxin] + S-adenosyl-L-homocysteine. The catalysed reaction is adenosine(37) in tRNA + 2 reduced [2Fe-2S]-[ferredoxin] + 2 S-adenosyl-L-methionine = 2-methyladenosine(37) in tRNA + 5'-deoxyadenosine + L-methionine + 2 oxidized [2Fe-2S]-[ferredoxin] + S-adenosyl-L-homocysteine. In terms of biological role, specifically methylates position 2 of adenine 2503 in 23S rRNA and position 2 of adenine 37 in tRNAs. m2A2503 modification seems to play a crucial role in the proofreading step occurring at the peptidyl transferase center and thus would serve to optimize ribosomal fidelity. This chain is Dual-specificity RNA methyltransferase RlmN, found in Erythrobacter litoralis (strain HTCC2594).